Reading from the N-terminus, the 310-residue chain is Acetyl-coenzyme A carboxylase carboxyl transferase subunit beta (310 aa).

The 270-residue stretch at 27–296 (LWKKCPKCSA…PEFENEEELE (270 aa)) folds into the CoA carboxyltransferase N-terminal domain. 4 residues coordinate Zn(2+): C31, C34, C50, and C53. The C4-type zinc finger occupies 31–53 (CPKCSAVLYRPELEKNLDVCPKC). The interval 285-310 (PEPEFENEEELEEEEMERPEPPDNVE) is disordered. The segment covering 287–310 (PEFENEEELEEEEMERPEPPDNVE) has biased composition (acidic residues).

Belongs to the AccD/PCCB family. In terms of assembly, acetyl-CoA carboxylase is a heterohexamer composed of biotin carboxyl carrier protein (AccB), biotin carboxylase (AccC) and two subunits each of ACCase subunit alpha (AccA) and ACCase subunit beta (AccD). Zn(2+) serves as cofactor.

The protein resides in the cytoplasm. It carries out the reaction N(6)-carboxybiotinyl-L-lysyl-[protein] + acetyl-CoA = N(6)-biotinyl-L-lysyl-[protein] + malonyl-CoA. It functions in the pathway lipid metabolism; malonyl-CoA biosynthesis; malonyl-CoA from acetyl-CoA: step 1/1. Its function is as follows. Component of the acetyl coenzyme A carboxylase (ACC) complex. Biotin carboxylase (BC) catalyzes the carboxylation of biotin on its carrier protein (BCCP) and then the CO(2) group is transferred by the transcarboxylase to acetyl-CoA to form malonyl-CoA. The sequence is that of Acetyl-coenzyme A carboxylase carboxyl transferase subunit beta from Hahella chejuensis (strain KCTC 2396).